The following is a 152-amino-acid chain: Lipoprotein signal peptidase (152 aa).

3 helical membrane-spanning segments follow: residues 33–53 (VVPP…FGLL), 58–78 (MLFV…YFKI), and 83–102 (PVLD…NLAD). Active-site residues include D111 and D125. The chain crosses the membrane as a helical span at residues 120–140 (VFNLADTAIVTGAFLLAWALL).

Belongs to the peptidase A8 family.

The protein localises to the cell membrane. The enzyme catalyses Release of signal peptides from bacterial membrane prolipoproteins. Hydrolyzes -Xaa-Yaa-Zaa-|-(S,diacylglyceryl)Cys-, in which Xaa is hydrophobic (preferably Leu), and Yaa (Ala or Ser) and Zaa (Gly or Ala) have small, neutral side chains.. The protein operates within protein modification; lipoprotein biosynthesis (signal peptide cleavage). Its function is as follows. This protein specifically catalyzes the removal of signal peptides from prolipoproteins. The chain is Lipoprotein signal peptidase from Pelotomaculum thermopropionicum (strain DSM 13744 / JCM 10971 / SI).